We begin with the raw amino-acid sequence, 367 residues long: 3-dehydroquinate synthase (367 aa).

NAD(+) is bound by residues 112–116 (GVIGD), 136–137 (TT), K149, K158, and 176–179 (TLKT). Residues E191, H256, and H273 each contribute to the Zn(2+) site.

The protein belongs to the sugar phosphate cyclases superfamily. Dehydroquinate synthase family. NAD(+) serves as cofactor. Co(2+) is required as a cofactor. The cofactor is Zn(2+).

It localises to the cytoplasm. It catalyses the reaction 7-phospho-2-dehydro-3-deoxy-D-arabino-heptonate = 3-dehydroquinate + phosphate. It participates in metabolic intermediate biosynthesis; chorismate biosynthesis; chorismate from D-erythrose 4-phosphate and phosphoenolpyruvate: step 2/7. Its function is as follows. Catalyzes the conversion of 3-deoxy-D-arabino-heptulosonate 7-phosphate (DAHP) to dehydroquinate (DHQ). The chain is 3-dehydroquinate synthase from Prochlorococcus marinus (strain SARG / CCMP1375 / SS120).